The sequence spans 435 residues: MAAHLLPICTLFLNLLSVAQGSRDPVVLNRPFTTIWNANTQWCLKRHGVDVDVSVFEVVVNPGQTFRGPNMTIFYSSQLGTYPYYTSAGEPVFGGLPQNASLDVHLNRTFKDILAAMPESNFSGLAVIDWEAWRPRWAFNWDAKDIYRQRSRALVQKQHPDWPAPWVEAAAQDQFQEAAQTWMAGTLKLGQTLRPHGLWGFYGFPDCYNYDFQSSNYTGQCPPGVSAQNDQLGWLWGQSRALYPSIYLPSALEGTNKTQLYVQHRVNEAFRVAAAAGDPNLPVLPYAQIFHDMTNRLLSREELEHSLGESAAQGAAGVVLWVSWENTRTKESCQSIKEYVDTTLGPFILNVTSGALLCSQAVCSGHGRCVRRPSHTEALPILNPSSFSIKPTPGGGPLTLQGALSLKDRVQMAEEFQCRCYPGWRGTWCEQQGTR.

The first 21 residues, 1–21, serve as a signal peptide directing secretion; the sequence is MAAHLLPICTLFLNLLSVAQG. 2 disulfide bridges follow: C43–C333 and C207–C221. Residues N70, N99, N107, and N121 are each glycosylated (N-linked (GlcNAc...) asparagine). E131 (proton donor) is an active-site residue. N216, N256, and N350 each carry an N-linked (GlcNAc...) asparagine glycan. 3 disulfide bridges follow: C358-C369, C363-C418, and C420-C429. One can recognise an EGF-like domain in the interval 418–429; that stretch reads CRCYPGWRGTWC.

Belongs to the glycosyl hydrolase 56 family. Highly expressed in spleen, kidney, and lung.

Its subcellular location is the secreted. It is found in the lysosome. It catalyses the reaction Random hydrolysis of (1-&gt;4)-linkages between N-acetyl-beta-D-glucosamine and D-glucuronate residues in hyaluronate.. In terms of biological role, may have a role in promoting tumor progression. May block the TGFB1-enhanced cell growth. This Sus scrofa (Pig) protein is Hyaluronidase-1 (HYAL1).